Consider the following 540-residue polypeptide: Cobalt-factor III methyltransferase (540 aa).

4 residues coordinate [4Fe-4S] cluster: C402, C405, C439, and C443.

The protein in the N-terminal section; belongs to the precorrin methyltransferase family. It depends on [4Fe-4S] cluster as a cofactor.

The catalysed reaction is Co(II)-factor III + AH2 + S-adenosyl-L-methionine = Co-precorrin-4 + A + S-adenosyl-L-homocysteine. It functions in the pathway cofactor biosynthesis; adenosylcobalamin biosynthesis. Functionally, methyltransferase that catalyzes the reduction, ring contraction and methylation of C-17 in cobalt-factor III to form cobalt-precorrin-4. Is also able to convert cobalt-precorrin-3 to cobalt-precorrin-4. The polypeptide is Cobalt-factor III methyltransferase (cbiH60) (Priestia megaterium (Bacillus megaterium)).